Reading from the N-terminus, the 709-residue chain is Probable lanosterol 14-alpha demethylase (709 aa).

Cys-425 contacts heme.

This sequence belongs to the cytochrome P450 family. The cofactor is heme.

It is found in the membrane. It catalyses the reaction a 14alpha-methyl steroid + 3 reduced [NADPH--hemoprotein reductase] + 3 O2 = a Delta(14) steroid + formate + 3 oxidized [NADPH--hemoprotein reductase] + 4 H2O + 4 H(+). It participates in steroid biosynthesis; zymosterol biosynthesis; zymosterol from lanosterol: step 1/6. Functionally, catalyzes the 14-alpha demethylation of obtusifoliol to 4 alpha-methyl-5 alpha-ergosta-8,14,24(28)-trien-3 beta-ol. The protein is Probable lanosterol 14-alpha demethylase of Acanthamoeba polyphaga (Amoeba).